Here is a 54-residue protein sequence, read N- to C-terminus: Large ribosomal subunit protein bL33 (54 aa).

It belongs to the bacterial ribosomal protein bL33 family.

In Corynebacterium urealyticum (strain ATCC 43042 / DSM 7109), this protein is Large ribosomal subunit protein bL33.